The primary structure comprises 283 residues: Shikimate dehydrogenase (NADP(+)) (283 aa).

Residues 16-18 (SLS) and threonine 63 contribute to the shikimate site. Lysine 67 (proton acceptor) is an active-site residue. Residue aspartate 79 coordinates NADP(+). Shikimate is bound by residues asparagine 88 and aspartate 103. NADP(+) contacts are provided by residues 128 to 132 (GAGGA), alanine 223, and glycine 243.

This sequence belongs to the shikimate dehydrogenase family. As to quaternary structure, homodimer.

It catalyses the reaction shikimate + NADP(+) = 3-dehydroshikimate + NADPH + H(+). Its pathway is metabolic intermediate biosynthesis; chorismate biosynthesis; chorismate from D-erythrose 4-phosphate and phosphoenolpyruvate: step 4/7. Involved in the biosynthesis of the chorismate, which leads to the biosynthesis of aromatic amino acids. Catalyzes the reversible NADPH linked reduction of 3-dehydroshikimate (DHSA) to yield shikimate (SA). The sequence is that of Shikimate dehydrogenase (NADP(+)) from Xanthomonas oryzae pv. oryzae (strain MAFF 311018).